Here is a 582-residue protein sequence, read N- to C-terminus: Proline--tRNA ligase (582 aa).

This sequence belongs to the class-II aminoacyl-tRNA synthetase family. ProS type 1 subfamily. As to quaternary structure, homodimer.

The protein resides in the cytoplasm. The catalysed reaction is tRNA(Pro) + L-proline + ATP = L-prolyl-tRNA(Pro) + AMP + diphosphate. Catalyzes the attachment of proline to tRNA(Pro) in a two-step reaction: proline is first activated by ATP to form Pro-AMP and then transferred to the acceptor end of tRNA(Pro). As ProRS can inadvertently accommodate and process non-cognate amino acids such as alanine and cysteine, to avoid such errors it has two additional distinct editing activities against alanine. One activity is designated as 'pretransfer' editing and involves the tRNA(Pro)-independent hydrolysis of activated Ala-AMP. The other activity is designated 'posttransfer' editing and involves deacylation of mischarged Ala-tRNA(Pro). The misacylated Cys-tRNA(Pro) is not edited by ProRS. The protein is Proline--tRNA ligase of Mycobacterium tuberculosis (strain CDC 1551 / Oshkosh).